A 298-amino-acid polypeptide reads, in one-letter code: tRNA pseudouridine synthase B (298 aa).

Aspartate 46 serves as the catalytic Nucleophile.

This sequence belongs to the pseudouridine synthase TruB family. Type 1 subfamily.

The enzyme catalyses uridine(55) in tRNA = pseudouridine(55) in tRNA. In terms of biological role, responsible for synthesis of pseudouridine from uracil-55 in the psi GC loop of transfer RNAs. This is tRNA pseudouridine synthase B from Paracoccus denitrificans (strain Pd 1222).